Consider the following 506-residue polypeptide: Maturase K (506 aa).

The protein belongs to the intron maturase 2 family. MatK subfamily.

It is found in the plastid. Its subcellular location is the chloroplast. In terms of biological role, usually encoded in the trnK tRNA gene intron. Probably assists in splicing its own and other chloroplast group II introns. This is Maturase K from Trifolium spumosum (Mediterranean clover).